The primary structure comprises 522 residues: Calcium-dependent protein kinase 4 (522 aa).

A compositionally biased stretch (polar residues) spans 1–10; the sequence is MGACFSSHTA. Positions 1-43 are disordered; sequence MGACFSSHTATAAADGGSGKRQQRKGDHKGKLPDGGGGEKEKE. Residue glycine 2 is the site of N-myristoyl glycine attachment. The span at 29-43 shows a compositional bias: basic and acidic residues; it reads KGKLPDGGGGEKEKE. Residues 59–319 enclose the Protein kinase domain; the sequence is YQVGRLLGHG…AAQALSHPWV (261 aa). ATP-binding positions include 65–73 and lysine 88; that span reads LGHGQFGYT. The active-site Proton acceptor is the aspartate 185. The tract at residues 325-355 is autoinhibitory domain; sequence ASEIPVDISVLSNMRQFVKYSRFKQFALRAL. 4 EF-hand domains span residues 362–397, 399–434, 441–476, and 481–508; these read EELA…DLPW, LKGP…IHQM, RWGL…GLKG, and LLEE…ASMS. Residues aspartate 375, aspartate 377, serine 379, serine 381, glutamate 386, aspartate 412, asparagine 414, aspartate 416, glutamate 423, aspartate 454, aspartate 456, aspartate 458, tyrosine 460, glutamate 465, aspartate 486, aspartate 488, aspartate 490, arginine 492, and glutamate 497 each contribute to the Ca(2+) site.

The protein belongs to the protein kinase superfamily. Ser/Thr protein kinase family. CDPK subfamily.

It is found in the membrane. It carries out the reaction L-seryl-[protein] + ATP = O-phospho-L-seryl-[protein] + ADP + H(+). The catalysed reaction is L-threonyl-[protein] + ATP = O-phospho-L-threonyl-[protein] + ADP + H(+). Activated by calcium. Autophosphorylation may play an important role in the regulation of the kinase activity. May play a role in signal transduction pathways that involve calcium as a second messenger. The sequence is that of Calcium-dependent protein kinase 4 from Oryza sativa subsp. japonica (Rice).